Here is a 570-residue protein sequence, read N- to C-terminus: Protein HEATR9 (570 aa).

This is Protein HEATR9 (HEATR9) from Macaca fascicularis (Crab-eating macaque).